The primary structure comprises 180 residues: Ribosome-recycling factor (180 aa).

The segment at Ser-135–Gln-156 is disordered.

This sequence belongs to the RRF family.

The protein resides in the cytoplasm. Functionally, responsible for the release of ribosomes from messenger RNA at the termination of protein biosynthesis. May increase the efficiency of translation by recycling ribosomes from one round of translation to another. In Oenococcus oeni (strain ATCC BAA-331 / PSU-1), this protein is Ribosome-recycling factor.